Reading from the N-terminus, the 146-residue chain is Ribonuclease H (146 aa).

An RNase H type-1 domain is found at 1-138 (MYAWTDGACR…ADALANRGID (138 aa)). Residues aspartate 6, glutamate 44, aspartate 66, and aspartate 130 each contribute to the Mg(2+) site.

Belongs to the RNase H family. In terms of assembly, monomer. Requires Mg(2+) as cofactor.

Its subcellular location is the cytoplasm. The catalysed reaction is Endonucleolytic cleavage to 5'-phosphomonoester.. Its function is as follows. Endonuclease that specifically degrades the RNA of RNA-DNA hybrids. The chain is Ribonuclease H from Alkalilimnicola ehrlichii (strain ATCC BAA-1101 / DSM 17681 / MLHE-1).